Reading from the N-terminus, the 1128-residue chain is Nck-associated protein 1 (1128 aa).

Ser2 bears the N-acetylserine mark. Residues 640–665 (AVNKKSKKQTGKKGEPEREKPGVESM) are disordered. A compositionally biased stretch (basic and acidic residues) spans 651-665 (KKGEPEREKPGVESM). A helical transmembrane segment spans residues 995 to 1015 (IACLLMVFVAVSLPTLASNVM).

Belongs to the HEM-1/HEM-2 family. As to quaternary structure, component of the WAVE1 complex composed of ABI2, CYFIP1 or CYFIP2, BRK1, NCKAP1 and WASF1/WAVE1. Within the complex, a heterodimer containing NCKAP1 and CYFIP1 interacts with a heterotrimer formed by WAVE1, ABI2 and BRK1. Component of the WAVE2 complex composed of ABI1, CYFIP1/SRA1, NCKAP1/NAP1 and WASF2/WAVE2. CYFIP2 binds to activated RAC1 which causes the complex to dissociate, releasing activated WASF1. The complex can also be activated by NCK1. Associates preferentially with the first SH3 domain of NCK. Interacts with NYAP1, NYAP2 and MYO16. Interacts with TMEM132D. (Microbial infection) Interacts with human cytomegalovirus protein UL135. Expressed in all tissues examined except peripheral blood leukocytes, with highest expression in brain, heart, and skeletal muscle. Expressed in cells of various brain regions including Purkinje cells and dentate nucleus of the cerebellum, CA4 region and dentate gyrus of the hippocampus, and in frontal gray and white matter.

Its subcellular location is the cell membrane. It localises to the cell projection. The protein resides in the lamellipodium membrane. Functionally, part of the WAVE complex that regulates lamellipodia formation. The WAVE complex regulates actin filament reorganization via its interaction with the Arp2/3 complex. Actin remodeling activity is regulated by RAC1. As component of the WAVE1 complex, required for BDNF-NTRK2 endocytic trafficking and signaling from early endosomes. This chain is Nck-associated protein 1 (NCKAP1), found in Homo sapiens (Human).